The chain runs to 380 residues: Probable RAD2-like endonuclease 076L (380 aa).

An N-domain region spans residues 1-101 (MGIKNLTQFL…QKIVSKTDAI (101 aa)). Positions 32, 73, 191, 193, 212, 214, and 281 each coordinate Mg(2+). An I-domain region spans residues 156 to 301 (IDRRRKYEFS…EKAYKYISDY (146 aa)).

It belongs to the XPG/RAD2 endonuclease family. Requires Mg(2+) as cofactor.

It is found in the host nucleus. Functionally, probable endonuclease. The chain is Probable RAD2-like endonuclease 076L from Invertebrate iridescent virus 3 (IIV-3).